Here is a 320-residue protein sequence, read N- to C-terminus: Stress-induced-phosphoprotein 1 (320 aa).

6 TPR repeats span residues 5 to 38 (AIAEKDLGNAAYKQKDFEKAHVHYDKAIELDPSN), 40 to 72 (TFYNNKAAVYFEEKKFAECVQFCEKAVEVGRET), 80 to 113 (AKAMSRAGNAFQKQNDLSLAVQWFHRSLSEFRDP), 140 to 173 (AQEEKNKGNEYFKKGDYPTAMRHYNEAVKRDPEN), 175 to 207 (ILYSNRAACLTKLMEFQRALDDCDTCIRLDSKF), and 208 to 241 (IKGYIRKAACLVAMREWSKAQRAYEDALQVDPSN). Residues 241 to 269 (NEEAREGVRNCLRSNDEDPEKAKERSLAD) form a disordered region. Over residues 242-269 (EEAREGVRNCLRSNDEDPEKAKERSLAD) the composition is skewed to basic and acidic residues. An STI1 domain is found at 269 to 308 (DPEVQEILRDPGMRMILEQMSNDPGAVREHLKNPEIFQKL).

Forms a complex with hsp-1/hsp70 and daf-21/hsp90. Interacts with daf-21/hsp90 (via the C-terminal MEEVD pentapeptide). In terms of tissue distribution, expressed ubiquitously in the whole body. Detected predominantly in the pharyngeal muscles, vulva epithelial cells, striated body-wall muscles, spermathecae and intestinal cell ring. Also observed in the tail regions of hermaphrodite and in the sensory rays and spicules of males.

Its subcellular location is the cytoplasm. In terms of biological role, plays a role in gonad development. Up-regulates longevity and thermotolerance. Binds daf-21/hsp90 and inhibits its ATPase activity. The chain is Stress-induced-phosphoprotein 1 from Caenorhabditis elegans.